Reading from the N-terminus, the 388-residue chain is Processive diacylglycerol beta-glucosyltransferase (388 aa).

This sequence belongs to the glycosyltransferase 28 family. UgtP subfamily.

The protein resides in the cell membrane. It carries out the reaction a 1,2-diacyl-3-O-(beta-D-glucopyranosyl)-sn-glycerol + UDP-alpha-D-glucose = a 1,2-diacyl-3-O-(beta-D-Glc-(1-&gt;6)-beta-D-Glc)-sn-glycerol + UDP + H(+). The catalysed reaction is a 1,2-diacyl-3-O-(beta-D-Glc-(1-&gt;6)-beta-D-Glc)-sn-glycerol + UDP-alpha-D-glucose = a 1,2-diacyl-3-O-(beta-D-Glc-(1-&gt;6)-beta-D-Glc-(1-&gt;6)-beta-D-Glc)-sn-glycerol + UDP + H(+). It catalyses the reaction a 1,2-diacyl-sn-glycerol + UDP-alpha-D-glucose = a 1,2-diacyl-3-O-(beta-D-glucopyranosyl)-sn-glycerol + UDP + H(+). It participates in glycolipid metabolism; diglucosyl-diacylglycerol biosynthesis. Its function is as follows. Processive glucosyltransferase involved in the biosynthesis of both the bilayer- and non-bilayer-forming membrane glucolipids. Is able to successively transfer up to three glucosyl residues to diacylglycerol (DAG), thereby catalyzing the formation of beta-monoglucosyl-DAG (3-O-(beta-D-glucopyranosyl)-1,2-diacyl-sn-glycerol), beta-diglucosyl-DAG (3-O-(beta-D-glucopyranosyl-beta-(1-&gt;6)-D-glucopyranosyl)-1,2-diacyl-sn-glycerol) and beta-triglucosyl-DAG (3-O-(beta-D-glucopyranosyl-beta-(1-&gt;6)-D-glucopyranosyl-beta-(1-&gt;6)-D-glucopyranosyl)-1,2-diacyl-sn-glycerol). Beta-diglucosyl-DAG is the predominant glycolipid found in Bacillales and is also used as a membrane anchor for lipoteichoic acid (LTA). This chain is Processive diacylglycerol beta-glucosyltransferase, found in Bacillus anthracis (strain A0248).